The primary structure comprises 195 residues: Nucleoside triphosphate pyrophosphatase (195 aa).

Asp70 acts as the Proton acceptor in catalysis.

It belongs to the Maf family. A divalent metal cation serves as cofactor.

The protein resides in the cytoplasm. It carries out the reaction a ribonucleoside 5'-triphosphate + H2O = a ribonucleoside 5'-phosphate + diphosphate + H(+). The enzyme catalyses a 2'-deoxyribonucleoside 5'-triphosphate + H2O = a 2'-deoxyribonucleoside 5'-phosphate + diphosphate + H(+). Functionally, nucleoside triphosphate pyrophosphatase. May have a dual role in cell division arrest and in preventing the incorporation of modified nucleotides into cellular nucleic acids. In Synechocystis sp. (strain ATCC 27184 / PCC 6803 / Kazusa), this protein is Nucleoside triphosphate pyrophosphatase.